We begin with the raw amino-acid sequence, 374 residues long: O-methyltransferase 16 (374 aa).

S-adenosyl-L-homocysteine-binding residues include S195, G219, D242, D262, and K276. An S-adenosyl-L-methionine-binding site is contributed by D242. The active-site Proton acceptor is the H280.

The protein belongs to the class I-like SAM-binding methyltransferase superfamily. Cation-independent O-methyltransferase family. Homodimer. In terms of tissue distribution, expressed mainly in vasculature and cortex tissues at low levels.

The enzyme catalyses dopamine + S-adenosyl-L-methionine = 4-methoxytyramine + S-adenosyl-L-homocysteine + H(+). It functions in the pathway aromatic compound metabolism. It participates in alkaloid biosynthesis. In terms of biological role, O-methyltransferase participating in the biosynthesis of natural products derived from phenylethylamine, including mescaline, a natural hallucinogen potentially used in psychotherapeutic treatments. Catalyzes the O-methylation of dopamine to produce 4-methoxytyramine. This is O-methyltransferase 16 from Lophophora williamsii (Peyote).